The sequence spans 385 residues: Alkanesulfonate monooxygenase (385 aa).

It belongs to the SsuD family.

It carries out the reaction an alkanesulfonate + FMNH2 + O2 = an aldehyde + FMN + sulfite + H2O + 2 H(+). Catalyzes the desulfonation of aliphatic sulfonates. This Paraburkholderia phymatum (strain DSM 17167 / CIP 108236 / LMG 21445 / STM815) (Burkholderia phymatum) protein is Alkanesulfonate monooxygenase.